Here is a 728-residue protein sequence, read N- to C-terminus: 1,4-alpha-glucan branching enzyme GlgB (728 aa).

Asp405 acts as the Nucleophile in catalysis. Residue Glu458 is the Proton donor of the active site.

This sequence belongs to the glycosyl hydrolase 13 family. GlgB subfamily. As to quaternary structure, monomer.

The enzyme catalyses Transfers a segment of a (1-&gt;4)-alpha-D-glucan chain to a primary hydroxy group in a similar glucan chain.. The protein operates within glycan biosynthesis; glycogen biosynthesis. Functionally, catalyzes the formation of the alpha-1,6-glucosidic linkages in glycogen by scission of a 1,4-alpha-linked oligosaccharide from growing alpha-1,4-glucan chains and the subsequent attachment of the oligosaccharide to the alpha-1,6 position. The protein is 1,4-alpha-glucan branching enzyme GlgB of Klebsiella pneumoniae subsp. pneumoniae (strain ATCC 700721 / MGH 78578).